A 271-amino-acid polypeptide reads, in one-letter code: MKI67 FHA domain-interacting nucleolar phosphoprotein (271 aa).

Residues 1 to 20 (MAEYSGPAKPTLALNPREDS) form a disordered region. A2 is subject to N-acetylalanine. A Glycyl lysine isopeptide (Lys-Gly) (interchain with G-Cter in SUMO2) cross-link involves residue K37. Residues 44–122 (GVVYLGHLPS…RLLSCKFMPR (79 aa)) enclose the RRM domain. Omega-N-methylarginine is present on R113. Glycyl lysine isopeptide (Lys-Gly) (interchain with G-Cter in SUMO2) cross-links involve residues K178 and K191. Residues T213 and T217 each carry the phosphothreonine modification. R223 and R224 each carry omega-N-methylated arginine. S226 is subject to Phosphoserine. A disordered region spans residues 242–271 (PVSPVKEDTQKTPAPESSGKKRLRKRKSKQ). A Glycyl lysine isopeptide (Lys-Gly) (interchain with G-Cter in SUMO1); alternate cross-link involves residue K247. A Glycyl lysine isopeptide (Lys-Gly) (interchain with G-Cter in SUMO2); alternate cross-link involves residue K247. Positions 261–271 (KKRLRKRKSKQ) are enriched in basic residues.

As to quaternary structure, binds to the FHA domain of MKI67; this interaction is enhanced in mitosis. Phosphorylated.

The protein resides in the nucleus. Its subcellular location is the nucleolus. The protein localises to the chromosome. The sequence is that of MKI67 FHA domain-interacting nucleolar phosphoprotein (Nifk) from Rattus norvegicus (Rat).